The chain runs to 609 residues: Protein tesmin/TSO1-like CXC 3 (609 aa).

The span at 69 to 84 (ESRFRSQKDVSASKEV) shows a compositional bias: basic and acidic residues. Disordered regions lie at residues 69–102 (ESRF…YKND), 307–328 (PISP…SSCK), 457–477 (LFEQ…KTQQ), and 569–609 (NSKR…TPHH). Residues 326–451 (SCKRCNCKKS…RCEGCKNAFG (126 aa)) enclose the CRC domain. The segment covering 466-477 (TSGTPGTKKTQQ) has biased composition (polar residues).

This sequence belongs to the lin-54 family. As to expression, ubiquitous but expressed mostly in flowers and at significant levels in leaves. Detected with highest levels in developing ovules and microspores, and in petals.

Its subcellular location is the nucleus. Its function is as follows. Plays a role in development of both male and female reproductive tissues. This chain is Protein tesmin/TSO1-like CXC 3 (TCX3), found in Arabidopsis thaliana (Mouse-ear cress).